A 2820-amino-acid chain; its full sequence is Neurofibromin (2820 aa).

A2 carries the N-acetylalanine modification. Phosphoserine occurs at positions 866 and 878. The 211-residue stretch at 1253–1463 (HLLYQLLWNM…DLARRFFLDI (211 aa)) folds into the Ras-GAP domain. A CRAL-TRIO domain is found at 1561–1719 (EKEEFKALKT…ATLALEEDLK (159 aa)). Residues 1561-1818 (EKEEFKALKT…RTRWELSQPD (258 aa)) are lipid binding. Residues S2169 and S2448 each carry the phosphoserine modification. Positions 2457-2482 (YPIHHGDPSSRTLKETQPWSSPRGSE) are disordered. Residues 2458-2470 (PIHHGDPSSRTLK) show a composition bias toward basic and acidic residues. The residue at position 2495 (T2495) is a Phosphothreonine. A phosphoserine mark is found at S2496, S2502, S2504, and S2524. Residues 2536–2552 (KRQEMESGITTPPKMRR) carry the Bipartite nuclear localization signal motif. At T2546 the chain carries Phosphothreonine. Phosphoserine occurs at positions 2578, 2783, and 2798. Positions 2768-2820 (TSQHSPGIDKENVELSPTTGHCNSGRTRHGSASQVQKQRSAGSFKRNSIKKIV) are disordered. The segment covering 2782–2808 (LSPTTGHCNSGRTRHGSASQVQKQRSA) has biased composition (polar residues).

Interacts with HTR6. Interacts with SPRED2. Post-translationally, ubiquitinated by RNF7/RBX2, leading to its degradation.

Its subcellular location is the nucleus. The protein localises to the nucleolus. It is found in the cell membrane. Stimulates the GTPase activity of Ras. NF1 shows greater affinity for Ras GAP, but lower specific activity. May be a regulator of Ras activity. This chain is Neurofibromin (Nf1), found in Rattus norvegicus (Rat).